The following is a 122-amino-acid chain: Large ribosomal subunit protein uL14 (122 aa).

It belongs to the universal ribosomal protein uL14 family. In terms of assembly, part of the 50S ribosomal subunit. Forms a cluster with proteins L3 and L19. In the 70S ribosome, L14 and L19 interact and together make contacts with the 16S rRNA in bridges B5 and B8.

In terms of biological role, binds to 23S rRNA. Forms part of two intersubunit bridges in the 70S ribosome. This Pseudomonas savastanoi pv. phaseolicola (strain 1448A / Race 6) (Pseudomonas syringae pv. phaseolicola (strain 1448A / Race 6)) protein is Large ribosomal subunit protein uL14.